Consider the following 521-residue polypeptide: Protein NRT1/ PTR FAMILY 5.5 (521 aa).

The next 12 membrane-spanning stretches (helical) occupy residues 3–23, 35–55, 62–82, 96–116, 134–154, 165–185, 279–299, 310–327, 356–376, 394–414, 440–460, and 478–498; these read VLSW…LYLT, AIVN…QFLV, FWML…LAIS, FYVA…SLGV, LVSF…AAIA, FTIP…GACS, VPLF…NTFF, FGSW…SEAA, PYGI…AAHV, VPMS…ITGI, VGVC…VGSV, and YYWV…IVTY.

It belongs to the major facilitator superfamily. Proton-dependent oligopeptide transporter (POT/PTR) (TC 2.A.17) family. As to expression, expressed in roots.

It is found in the membrane. The polypeptide is Protein NRT1/ PTR FAMILY 5.5 (NPF5.5) (Arabidopsis thaliana (Mouse-ear cress)).